A 460-amino-acid chain; its full sequence is Tubby-related protein 3 (460 aa).

2 disordered regions span residues 37–132 and 151–193; these read KKQR…ETAP and YDEE…GVTA. The span at 151-162 shows a compositional bias: acidic residues; the sequence is YDEEPDKEEDEG. The span at 166–188 shows a compositional bias: low complexity; the sequence is SSPSARSEESAAASQKAASETGA.

This sequence belongs to the TUB family. Associates with the IFT complex A (IFT-A). Interacts with SIRT1. In terms of tissue distribution, widely expressed including eyes and adipose depots.

It is found in the nucleus. Its subcellular location is the cell membrane. The protein localises to the cell projection. It localises to the cilium. The protein resides in the cytoplasm. It is found in the secreted. In terms of biological role, negative regulator of the Shh signaling transduction pathway: recruited to primary cilia via association with the IFT complex A (IFT-A) and is required for recruitment of G protein-coupled receptor GPR161 to cilia, a promoter of PKA-dependent basal repression machinery in Shh signaling. Binds to phosphorylated inositide (phosphoinositide) lipids. Both IFT-A- and phosphoinositide-binding properties are required to regulate ciliary G protein-coupled receptor trafficking. During adipogenesis, regulates ciliary trafficking of FFAR4 in preadipocytes. The protein is Tubby-related protein 3 of Mus musculus (Mouse).